A 406-amino-acid chain; its full sequence is Argininosuccinate synthase (406 aa).

ATP-binding positions include 13-21 and alanine 40; that span reads AYSGGLDTS. Tyrosine 91 and serine 96 together coordinate L-citrulline. Glycine 121 serves as a coordination point for ATP. L-aspartate contacts are provided by threonine 123, asparagine 127, and aspartate 128. Asparagine 127 is a binding site for L-citrulline. Arginine 131, serine 182, serine 191, glutamate 267, and tyrosine 279 together coordinate L-citrulline.

The protein belongs to the argininosuccinate synthase family. Type 1 subfamily. In terms of assembly, homotetramer.

Its subcellular location is the cytoplasm. It carries out the reaction L-citrulline + L-aspartate + ATP = 2-(N(omega)-L-arginino)succinate + AMP + diphosphate + H(+). It functions in the pathway amino-acid biosynthesis; L-arginine biosynthesis; L-arginine from L-ornithine and carbamoyl phosphate: step 2/3. The sequence is that of Argininosuccinate synthase from Brucella abortus (strain S19).